The primary structure comprises 66 residues: Sodium channel neurotoxin MeuNaTxalpha-7 (66 aa).

The 63-residue stretch at 2–64 (RDGYIADDKN…VPIKVSGKCN (63 aa)) folds into the LCN-type CS-alpha/beta domain. Cystine bridges form between C12–C63, C16–C36, C22–C46, and C26–C48. N64 is modified (asparagine amide).

Belongs to the long (4 C-C) scorpion toxin superfamily. Sodium channel inhibitor family. Alpha subfamily. In terms of tissue distribution, expressed by the venom gland.

Its subcellular location is the secreted. Alpha toxins bind voltage-independently at site-3 of sodium channels (Nav) and inhibit the inactivation of the activated channels, thereby blocking neuronal transmission. The chain is Sodium channel neurotoxin MeuNaTxalpha-7 from Mesobuthus eupeus (Lesser Asian scorpion).